Here is a 321-residue protein sequence, read N- to C-terminus: tRNA(Ile)-lysidine synthase (321 aa).

ATP is bound at residue 21–26; it reads SYGSDS.

The protein belongs to the tRNA(Ile)-lysidine synthase family.

The protein localises to the cytoplasm. It catalyses the reaction cytidine(34) in tRNA(Ile2) + L-lysine + ATP = lysidine(34) in tRNA(Ile2) + AMP + diphosphate + H(+). In terms of biological role, ligates lysine onto the cytidine present at position 34 of the AUA codon-specific tRNA(Ile) that contains the anticodon CAU, in an ATP-dependent manner. Cytidine is converted to lysidine, thus changing the amino acid specificity of the tRNA from methionine to isoleucine. This chain is tRNA(Ile)-lysidine synthase, found in Campylobacter jejuni (strain RM1221).